A 512-amino-acid chain; its full sequence is Plastidal glycolate/glycerate translocator 1, chloroplastic (512 aa).

A chloroplast-targeting transit peptide spans 1–76 (MATLLATPIF…MNFERKLSVQ (76 aa)). Ala-77 bears the N-acetylalanine mark. Transmembrane regions (helical) follow at residues 93-113 (VIAI…DYFL), 127-147 (ALFG…VVPA), 160-180 (FLFI…VLPL), 195-215 (YIVA…AIAV), 238-258 (LELW…LFYP), 270-290 (PFLL…PSSI), 293-313 (VFHP…AFGY), 336-356 (AGDI…FSMF), 367-387 (AEIF…TALV), 398-418 (TVSI…VSLF), 425-445 (LTAA…QVVL), and 480-500 (LPFC…LCSV).

The protein belongs to the CidB/LrgB family. Expressed in leaves, stems and flowers, but not in roots.

It localises to the plastid. Its subcellular location is the chloroplast membrane. Its function is as follows. Glycolate/glycerate transporter required for photorespiration. The polypeptide is Plastidal glycolate/glycerate translocator 1, chloroplastic (PLGG1) (Arabidopsis thaliana (Mouse-ear cress)).